We begin with the raw amino-acid sequence, 410 residues long: Phosphoserine phosphatase (410 aa).

An ACT domain is found at 13 to 91; that stretch reads LVKIFGKDRP…QAEIISGIGD (79 aa). D187 serves as the catalytic Nucleophile. Mg(2+) contacts are provided by D187 and D189. Catalysis depends on D189, which acts as the Proton donor. Residues E196, R232, 275–276, and K320 contribute to the substrate site; that span reads SG. A Mg(2+)-binding site is contributed by D343. N346 contacts substrate.

The protein belongs to the HAD-like hydrolase superfamily. SerB family. The cofactor is Mg(2+).

The enzyme catalyses O-phospho-L-serine + H2O = L-serine + phosphate. The catalysed reaction is O-phospho-D-serine + H2O = D-serine + phosphate. It functions in the pathway amino-acid biosynthesis; L-serine biosynthesis; L-serine from 3-phospho-D-glycerate: step 3/3. Catalyzes the dephosphorylation of phosphoserine (P-Ser) in vitro. Also catalyzes the dephosphorylation of phosphothreonine (P-Thr) in vitro. This chain is Phosphoserine phosphatase, found in Streptomyces coelicolor (strain ATCC BAA-471 / A3(2) / M145).